The chain runs to 1245 residues: Trafficking protein particle complex II-specific subunit 130 homolog (1245 aa).

Disordered stretches follow at residues 488–524 (GDGSGLDANSKPSPNKSASNYMARTMSGPATSETSLP) and 884–903 (HVGGTDASKTSSSSTDTRKV). Composition is skewed to low complexity over residues 495 to 507 (ANSKPSPNKSASN) and 888 to 898 (TDASKTSSSST).

It belongs to the TMEM1 family. In terms of assembly, part of the multisubunit TRAPP (transport protein particle) II complex composed of BET3, BET5, TRS20, TRS23, TRS31, TRS33, TRS65, TRS85, TRS120 and TRS130.

The protein localises to the golgi apparatus. Its subcellular location is the trans-Golgi network. The protein resides in the early endosome. Functionally, specific subunit of the TRAPP II complex, a highly conserved vesicle tethering complex that is required for the proper transport of proteins in post-Golgi trafficking pathways to the growing cell plate in mitotic active cells. In Oryza sativa subsp. japonica (Rice), this protein is Trafficking protein particle complex II-specific subunit 130 homolog.